We begin with the raw amino-acid sequence, 308 residues long: Testis-specific Y-encoded protein 8 (308 aa).

This sequence belongs to the nucleosome assembly protein (NAP) family.

Its subcellular location is the cytoplasm. The protein resides in the nucleus. In terms of biological role, may be involved in sperm differentiation and proliferation. The chain is Testis-specific Y-encoded protein 8 (TSPY8) from Homo sapiens (Human).